The following is a 263-amino-acid chain: Follistatin-related protein 3 (263 aa).

Positions 1 to 26 (MRPGAPGPLWPLPWGALAWAVGFVSS) are cleaved as a signal peptide. Positions 36–107 (GVCWLQQGQE…SCDGVECGPG (72 aa)) constitute a TB domain. Cystine bridges form between cysteine 38–cysteine 61, cysteine 48–cysteine 92, cysteine 62–cysteine 95, cysteine 99–cysteine 110, cysteine 104–cysteine 119, cysteine 121–cysteine 153, cysteine 125–cysteine 146, cysteine 135–cysteine 167, cysteine 171–cysteine 182, cysteine 176–cysteine 192, cysteine 195–cysteine 229, cysteine 200–cysteine 222, and cysteine 211–cysteine 243. N-linked (GlcNAc...) asparagine glycosylation is present at asparagine 73. One can recognise a Follistatin-like 1 domain in the interval 99–119 (CDGVECGPGKACRMLGGRPRC). The Kazal-like 1 domain maps to 113–169 (LGGRPRCECAPDCSGLPARLQVCGSDGATYRDECELRAARCRGHPDLSVMYRGRCRK). The Follistatin-like 2 domain maps to 170-193 (SCEHVVCPRPQSCVVDQTGSAHCV). The 57-residue stretch at 189–245 (SAHCVVCRAAPCPVPSSPGQELCGNNNVTYISSCHMRQATCFLGRSIGVRHAGSCAG) folds into the Kazal-like 2 domain. N-linked (GlcNAc...) asparagine glycosylation occurs at asparagine 215. The interval 242–263 (SCAGTPEEPPGGESAEEEENFV) is disordered. Serine 255 carries the phosphoserine; by FAM20C modification.

In terms of assembly, interacts with INHBA and INHBB. Interacts with FN1. Interacts with ADAM12. Isoform 2 interacts with MLLT10; the interaction enhances MLLT10 in vitro transcriptional activity and self-association. Interacts with MSTN. Expressed in a wide range of tissues.

Its subcellular location is the secreted. It is found in the nucleus. Isoform 1 or the secreted form is a binding and antagonizing protein for members of the TGF-beta family, such as activin, BMP2 and MSTN. Inhibits activin A-, activin B-, BMP2- and MSDT-induced cellular signaling; more effective on activin A than on activin B. Involved in bone formation; inhibits osteoclast differentiation. Involved in hematopoiesis; involved in differentiation of hemopoietic progenitor cells, increases hematopoietic cell adhesion to fibronectin and seems to contribute to the adhesion of hematopoietic precursor cells to the bone marrow stroma. Isoform 2 or the nuclear form is probably involved in transcriptional regulation via interaction with MLLT10. This is Follistatin-related protein 3 (FSTL3) from Homo sapiens (Human).